A 191-amino-acid polypeptide reads, in one-letter code: Cytochrome c oxidase subunit 6b-1 (191 aa).

A compositionally biased stretch (polar residues) spans M1–E14. Residues M1 to F126 are disordered. A2 bears the N-acetylalanine mark. 2 stretches are compositionally biased toward basic and acidic residues: residues Y16–A37 and E45–S56. Positions A72–E98 are enriched in low complexity. The segment covering E99–P114 has biased composition (acidic residues). Residues T134–W177 enclose the CHCH domain. A Cx9C motif motif is present at residues C137–C147. Intrachain disulfides connect C137–C169 and C147–C158. The Cx10C motif signature appears at C158–C169.

It belongs to the cytochrome c oxidase subunit 6B (TC 3.D.4.8) family. In terms of tissue distribution, expressed in the whole plant.

The protein localises to the mitochondrion. In terms of biological role, this protein is one of the nuclear-coded polypeptide chains of cytochrome c oxidase, the terminal oxidase in mitochondrial electron transport. This protein may be one of the heme-binding subunits of the oxidase. The protein is Cytochrome c oxidase subunit 6b-1 (COX6B-1) of Arabidopsis thaliana (Mouse-ear cress).